The sequence spans 143 residues: UPF0201 protein Pcal_0593 (143 aa).

The protein belongs to the UPF0201 family.

This Pyrobaculum calidifontis (strain DSM 21063 / JCM 11548 / VA1) protein is UPF0201 protein Pcal_0593.